We begin with the raw amino-acid sequence, 180 residues long: Ribulose bisphosphate carboxylase small subunit, chloroplastic (180 aa).

Residues Met1–Asn56 constitute a chloroplast transit peptide.

This sequence belongs to the RuBisCO small chain family. In terms of assembly, heterohexadecamer of 8 large and 8 small subunits.

The protein resides in the plastid. The protein localises to the chloroplast. Functionally, ruBisCO catalyzes two reactions: the carboxylation of D-ribulose 1,5-bisphosphate, the primary event in carbon dioxide fixation, as well as the oxidative fragmentation of the pentose substrate. Both reactions occur simultaneously and in competition at the same active site. Although the small subunit is not catalytic it is essential for maximal activity. This chain is Ribulose bisphosphate carboxylase small subunit, chloroplastic, found in Medicago sativa (Alfalfa).